A 541-amino-acid chain; its full sequence is Pheromone B beta 1 receptor (541 aa).

Residues 1-3 (MHP) are Extracellular-facing. A helical membrane pass occupies residues 4 to 24 (EFAPVAFLSAASLALPLPWHW). Topologically, residues 25–33 (RAGNVATLS) are cytoplasmic. Residues 34-54 (IIAWLFIMNMIYGINAVIWAG) form a helical membrane-spanning segment. Residues 55-69 (SARITAVVYCDITTK) lie on the Extracellular side of the membrane. A helical membrane pass occupies residues 70-90 (LTIGGNFALPAACLCLCIHLE). At 91–109 (RVASVRAAQTTAADKRRRT) the chain is on the cytoplasmic side. The helical transmembrane segment at 110 to 130 (IFELAMCWLLPIIFMALHYVV) threads the bilayer. At 131–150 (QGHRFDIVEDFGCRPATYYS) the chain is on the extracellular side. The chain crosses the membrane as a helical span at residues 151 to 171 (IPAIFIVWVPPLTMAAASLVY). At 172-205 (ASLAIRHFMHRRLSFAMHLQARSSALTTSRYLRL) the chain is on the cytoplasmic side. Residues 206 to 226 (ILMAIVQLVWLVVTTAYTLWF) traverse the membrane as a helical segment. The Extracellular segment spans residues 227 to 264 (SSMTLNLRPWTTWADVHSNFGRIQTWPAIITPAVILRG). A helical transmembrane segment spans residues 265 to 285 (ACTLWWMVPASTWIFVAFFAF). Residues 286–541 (GNDAVEEYKR…IASVFPGGRR (256 aa)) lie on the Cytoplasmic side of the membrane. 2 disordered regions span residues 364-393 (TTSTVVSSMPPPYSLPPPPPPQKYTSPLDS) and 414-541 (YTIE…GGRR). A compositionally biased stretch (pro residues) spans 372-385 (MPPPYSLPPPPPPQ). Positions 420-429 (PETPSTSSST) are enriched in low complexity. Composition is skewed to pro residues over residues 467 to 478 (IPAPPSLPPPTH) and 493 to 502 (SRPPAFPPYP).

Belongs to the G-protein coupled receptor 4 family.

It localises to the membrane. In terms of biological role, receptor for the BBP1 pheromone, a prenylated mating factor. This is Pheromone B beta 1 receptor (BBR1) from Schizophyllum commune (Split gill fungus).